Consider the following 178-residue polypeptide: Large ribosomal subunit protein uL6 (178 aa).

This sequence belongs to the universal ribosomal protein uL6 family. In terms of assembly, part of the 50S ribosomal subunit.

In terms of biological role, this protein binds to the 23S rRNA, and is important in its secondary structure. It is located near the subunit interface in the base of the L7/L12 stalk, and near the tRNA binding site of the peptidyltransferase center. The chain is Large ribosomal subunit protein uL6 from Buchnera aphidicola subsp. Schizaphis graminum (strain Sg).